Reading from the N-terminus, the 185-residue chain is Ribosome-recycling factor (185 aa).

The protein belongs to the RRF family.

It is found in the cytoplasm. In terms of biological role, responsible for the release of ribosomes from messenger RNA at the termination of protein biosynthesis. May increase the efficiency of translation by recycling ribosomes from one round of translation to another. In Haemophilus influenzae (strain 86-028NP), this protein is Ribosome-recycling factor.